A 528-amino-acid chain; its full sequence is Bifunctional purine biosynthesis protein PurH (528 aa).

Residues T2–V149 form the MGS-like domain.

This sequence belongs to the PurH family.

The catalysed reaction is (6R)-10-formyltetrahydrofolate + 5-amino-1-(5-phospho-beta-D-ribosyl)imidazole-4-carboxamide = 5-formamido-1-(5-phospho-D-ribosyl)imidazole-4-carboxamide + (6S)-5,6,7,8-tetrahydrofolate. It carries out the reaction IMP + H2O = 5-formamido-1-(5-phospho-D-ribosyl)imidazole-4-carboxamide. It participates in purine metabolism; IMP biosynthesis via de novo pathway; 5-formamido-1-(5-phospho-D-ribosyl)imidazole-4-carboxamide from 5-amino-1-(5-phospho-D-ribosyl)imidazole-4-carboxamide (10-formyl THF route): step 1/1. The protein operates within purine metabolism; IMP biosynthesis via de novo pathway; IMP from 5-formamido-1-(5-phospho-D-ribosyl)imidazole-4-carboxamide: step 1/1. The protein is Bifunctional purine biosynthesis protein PurH of Roseobacter denitrificans (strain ATCC 33942 / OCh 114) (Erythrobacter sp. (strain OCh 114)).